A 340-amino-acid polypeptide reads, in one-letter code: DNA-directed RNA polymerase subunit alpha (340 aa).

The interval 1–233 (MYRNWRDLIS…EQLSIFINFD (233 aa)) is alpha N-terminal domain (alpha-NTD). Residues 251-340 (INENLYRSVD…RLRGERKDEE (90 aa)) are alpha C-terminal domain (alpha-CTD).

The protein belongs to the RNA polymerase alpha chain family. Homodimer. The RNAP catalytic core consists of 2 alpha, 1 beta, 1 beta' and 1 omega subunit. When a sigma factor is associated with the core the holoenzyme is formed, which can initiate transcription.

It catalyses the reaction RNA(n) + a ribonucleoside 5'-triphosphate = RNA(n+1) + diphosphate. Its function is as follows. DNA-dependent RNA polymerase catalyzes the transcription of DNA into RNA using the four ribonucleoside triphosphates as substrates. The sequence is that of DNA-directed RNA polymerase subunit alpha from Geobacter sulfurreducens (strain ATCC 51573 / DSM 12127 / PCA).